Here is a 265-residue protein sequence, read N- to C-terminus: GTP cyclohydrolase FolE2 (265 aa).

This sequence belongs to the GTP cyclohydrolase IV family.

It catalyses the reaction GTP + H2O = 7,8-dihydroneopterin 3'-triphosphate + formate + H(+). It functions in the pathway cofactor biosynthesis; 7,8-dihydroneopterin triphosphate biosynthesis; 7,8-dihydroneopterin triphosphate from GTP: step 1/1. Converts GTP to 7,8-dihydroneopterin triphosphate. The polypeptide is GTP cyclohydrolase FolE2 (Bordetella avium (strain 197N)).